A 381-amino-acid polypeptide reads, in one-letter code: G-protein coupled receptor homolog Q2/3L (381 aa).

At M1–S91 the chain is on the extracellular side. N-linked (GlcNAc...) asparagine; by host glycosylation is found at N2, N15, N19, N41, N50, N56, and N62. The helical transmembrane segment at F92–V112 threads the bilayer. The Cytoplasmic portion of the chain corresponds to L113–D126. The helical transmembrane segment at M127–L147 threads the bilayer. Residues Y148–K165 are Extracellular-facing. A helical transmembrane segment spans residues A166 to D186. The Cytoplasmic portion of the chain corresponds to R187–G206. A helical transmembrane segment spans residues I207 to F227. At Y228–K251 the chain is on the extracellular side. A helical membrane pass occupies residues L252 to Y272. Over C273 to M294 the chain is Cytoplasmic. The helical transmembrane segment at V295–V315 threads the bilayer. At S316–A336 the chain is on the extracellular side. The helical transmembrane segment at V337–F357 threads the bilayer. The Cytoplasmic portion of the chain corresponds to C358 to G381.

This sequence belongs to the G-protein coupled receptor 1 family.

It is found in the host cell membrane. In terms of biological role, putative chemokine receptor. This is G-protein coupled receptor homolog Q2/3L from Ovis aries (Sheep).